Consider the following 461-residue polypeptide: Asparagine--tRNA ligase (461 aa).

Belongs to the class-II aminoacyl-tRNA synthetase family. In terms of assembly, homodimer.

Its subcellular location is the cytoplasm. It catalyses the reaction tRNA(Asn) + L-asparagine + ATP = L-asparaginyl-tRNA(Asn) + AMP + diphosphate + H(+). The polypeptide is Asparagine--tRNA ligase (Solibacter usitatus (strain Ellin6076)).